We begin with the raw amino-acid sequence, 565 residues long: Adenine deaminase (565 aa).

This sequence belongs to the metallo-dependent hydrolases superfamily. Adenine deaminase family. Requires Mn(2+) as cofactor.

It carries out the reaction adenine + H2O + H(+) = hypoxanthine + NH4(+). The polypeptide is Adenine deaminase (Sinorhizobium fredii (strain NBRC 101917 / NGR234)).